A 160-amino-acid polypeptide reads, in one-letter code: uncharacterized protein (160 aa).

This is an uncharacterized protein from Galliformes (FAdV-1).